A 78-amino-acid chain; its full sequence is Glycophorin-E (78 aa).

Residues 1-19 form the signal peptide; it reads MYGKIIFVLLLSGIVSISA. Residues 20 to 52 are Extracellular-facing; sequence SSTTGVAMHTSTSSSVTKSYISSQTNGITLINW. A helical membrane pass occupies residues 53–73; sequence WAMARVIFEVMLVVVGMIILI. At 74–78 the chain is on the cytoplasmic side; sequence SYCIR.

Belongs to the glycophorin-A family. The N-terminal extracellular domain is heavily glycosylated on serine and threonine residues. As to expression, erythrocytes.

The protein resides in the membrane. Its function is as follows. This protein is a minor sialoglycoprotein in human erythrocyte membranes. The sequence is that of Glycophorin-E (GYPE) from Homo sapiens (Human).